The following is a 518-amino-acid chain: MTTSHASHPDRLLPADPGTRDIARRLLAHVEDLPIISPHGHLEASMFVKDEAFPDPTSLLISPDHYLTRMMHSAGVDLADLRVGGHEGKSAREAWRIFMSHWDLYAGTATGYWVEQEFEHVFGINAERLNVGTPEHADAIFDELTDILAKPDFRPRALAEQFNLEVLATTDDPLDDLADHKALADDPTFSPRVLPTFRPDAYTKMYNAGWAEKTTKLIDTAGDGKAGWEGYLQAMRNRRQYFINHGATSADHGLHDTDTTPLSHKDAQKILDKGLAGTATLAEMHAFEANTTYRFAEMSQEDGLVMTIHPGVYRNHSASAQKKFGADIGADIPFQMEFTNGLRPLLSDFGENKDLISDSSFNRWLRTVSLGSTQDADMAAASNLAANSKMARQNTRDILDAVSDGGVMLGRNGALVLGPVVGTLHIKFIAPLNKRVERVMYKTGLSEAAAAEQCALEDRLREEMAHALYQWNPGRDENYDLVINTGSMTYEQIVDLVVETYARKYPLHVRIIPNGKDQ.

Belongs to the metallo-dependent hydrolases superfamily. Uronate isomerase family.

It carries out the reaction D-glucuronate = D-fructuronate. The enzyme catalyses aldehydo-D-galacturonate = keto-D-tagaturonate. Its pathway is carbohydrate metabolism; pentose and glucuronate interconversion. This is Uronate isomerase (uxaC) from Corynebacterium glutamicum (strain ATCC 13032 / DSM 20300 / JCM 1318 / BCRC 11384 / CCUG 27702 / LMG 3730 / NBRC 12168 / NCIMB 10025 / NRRL B-2784 / 534).